The following is a 393-amino-acid chain: tRNA(Met) cytidine acetate ligase (393 aa).

Gly81, Asn142, and Arg167 together coordinate ATP.

Belongs to the TmcAL family.

Its subcellular location is the cytoplasm. The enzyme catalyses cytidine(34) in elongator tRNA(Met) + acetate + ATP = N(4)-acetylcytidine(34) in elongator tRNA(Met) + AMP + diphosphate. In terms of biological role, catalyzes the formation of N(4)-acetylcytidine (ac(4)C) at the wobble position of elongator tRNA(Met), using acetate and ATP as substrates. First activates an acetate ion to form acetyladenylate (Ac-AMP) and then transfers the acetyl group to tRNA to form ac(4)C34. The sequence is that of tRNA(Met) cytidine acetate ligase from Bacillus thuringiensis (strain Al Hakam).